Consider the following 552-residue polypeptide: Mothers against decapentaplegic homolog 4 (552 aa).

A mediates interaction with ZBTB7A region spans residues 1–322 (MDNMSITNTP…PISNHPAPEY (322 aa)). One can recognise an MH1 domain in the interval 18-142 (SIVHSLMCHR…YERVVSPGID (125 aa)). Lys37 carries the post-translational modification N6-acetyllysine. The required for interaction with TSC22D1 stretch occupies residues 44–69 (VKKLKEKKDELDSLITAITTNGAHPS). A Zn(2+)-binding site is contributed by Cys71. Residue Lys113 forms a Glycyl lysine isopeptide (Lys-Gly) (interchain with G-Cter in SUMO2) linkage. Zn(2+)-binding residues include Cys115, Cys127, and His132. Disordered regions lie at residues 168-194 (GQPS…STET) and 236-256 (GLLQ…FTGQ). Composition is skewed to polar residues over residues 170–194 (PSLS…STET) and 245–256 (QPGQQQNGFTGQ). Residues 275–320 (PYTPNLPHHQNGHLQHHPPMPPHPGHYWPVHNELAFQPPISNHPAP) form an SAD region. In terms of domain architecture, MH2 spans 323 to 552 (WCSIAYFEMD…MPIADPQPLD (230 aa)). An N6-acetyllysine mark is found at Lys428 and Lys507. Residue Lys519 forms a Glycyl lysine isopeptide (Lys-Gly) (interchain with G-Cter in ubiquitin) linkage.

The protein belongs to the dwarfin/SMAD family. Monomer; in the absence of TGF-beta activation. Heterotrimer; on TGF-beta activation. Heterotrimer composed of two molecules of a C-terminally phosphorylated R-SMAD molecule, SMAD2 or SMAD3, and one molecule of SMAD4 to form the transcriptional active SMAD2/SMAD3-SMAD4 complex. Found in a ternary complex composed of SMAD4, STK11/LKB1 and STK11IP. Found in a complex with SMAD1 and YY1. Identified in a complex that contains at least ZNF451, SMAD2, SMAD3 and SMAD4. Interacts with ATF2, COPS5, DACH1, MSG1, SKI, STK11/LKB1, STK11IP and TRIM33. Associates with ZNF423 or ZNF521 in response to BMP2 leading to activate transcription of BMP target genes. Interacts with USP9X. Interacts (via the MH1 and MH2 domains) with RBPMS. Interacts with WWTR1 (via coiled-coil domain). Interacts with CITED1 and CITED2. Interacts with PDPK1 (via PH domain). Interacts with VPS39; this interaction affects heterodimer formation with SMAD3, but not with SMAD2, and leads to inhibition of SMAD3-dependent transcription activation. Interactions with VPS39 and SMAD2 may be mutually exclusive. Interacts (via MH2 domain) with ZNF451 (via N-terminal zinc-finger domains). Interacts with ZC3H3. Interacts weakly with ZNF8. Interacts with NUP93 and IPO7; translocates SMAD4 to the nucleus through the NPC upon BMP7 stimulation resulting in activation of SMAD4 signaling. Interacts with CREB3L1, the interaction takes place upon TGFB1 induction and SMAD4 acts as a CREB3L1 coactivator to induce the expression of genes involved in the assembly of collagen extracellular matrix. Interacts with DLX1. Interacts with ZBTB7A; the interaction is direct and stimulated by TGFB1. Interacts with CREBBP; the recruitment of this transcriptional coactivator is negatively regulated by ZBTB7A. Interacts with EP300; the interaction with this transcriptional coactivator is negatively regulated by ZBTB7A. Interacts with HDAC1. Interacts (via MH2 domain) with ZMIZ1 (via SP-RING-type domain); in the TGF-beta signaling pathway increases the activity of the SMAD3/SMAD4 transcriptional complex. Interacts (via N-terminus) with TSC22D1. Post-translationally, phosphorylated by PDPK1. In terms of processing, monoubiquitinated on Lys-519 by E3 ubiquitin-protein ligase TRIM33. Monoubiquitination hampers its ability to form a stable complex with activated SMAD2/3 resulting in inhibition of TGF-beta/BMP signaling cascade. Deubiquitination by USP9X restores its competence to mediate TGF-beta signaling.

Its subcellular location is the cytoplasm. It localises to the nucleus. Functionally, in muscle physiology, plays a central role in the balance between atrophy and hypertrophy. When recruited by MSTN, promotes atrophy response via phosphorylated SMAD2/4. MSTN decrease causes SMAD4 release and subsequent recruitment by the BMP pathway to promote hypertrophy via phosphorylated SMAD1/5/8. Acts synergistically with SMAD1 and YY1 in bone morphogenetic protein (BMP)-mediated cardiac-specific gene expression. Binds to SMAD binding elements (SBEs) (5'-GTCT/AGAC-3') within BMP response element (BMPRE) of cardiac activating regions. Common SMAD (co-SMAD) is the coactivator and mediator of signal transduction by TGF-beta (transforming growth factor). Component of the heterotrimeric SMAD2/SMAD3-SMAD4 complex that forms in the nucleus and is required for the TGF-mediated signaling. Promotes binding of the SMAD2/SMAD4/FAST-1 complex to DNA and provides an activation function required for SMAD1 or SMAD2 to stimulate transcription. Component of the multimeric SMAD3/SMAD4/JUN/FOS complex which forms at the AP1 promoter site; required for synergistic transcriptional activity in response to TGF-beta. May act as a tumor suppressor. Positively regulates PDPK1 kinase activity by stimulating its dissociation from the 14-3-3 protein YWHAQ which acts as a negative regulator. The sequence is that of Mothers against decapentaplegic homolog 4 (SMAD4) from Homo sapiens (Human).